Here is a 198-residue protein sequence, read N- to C-terminus: Probable host range protein 2 (198 aa).

The disordered stretch occupies residues 171–198 (SDDDDDNDNADDDEEDDDEVNDIEDDYE).

It belongs to the poxviridae C7 protein family.

In terms of biological role, plays a role for multiplication of the virus in different cell types. The polypeptide is Probable host range protein 2 (Bos taurus (Bovine)).